The chain runs to 276 residues: Putative translation initiation factor eIF-2B subunit 2-like (276 aa).

It belongs to the eIF-2B alpha/beta/delta subunits family. Complex of two different subunits.

In terms of biological role, catalyzes the exchange of initiation factor 2-bound GDP for GTP. In Pyrococcus furiosus (strain ATCC 43587 / DSM 3638 / JCM 8422 / Vc1), this protein is Putative translation initiation factor eIF-2B subunit 2-like.